We begin with the raw amino-acid sequence, 398 residues long: MMSDLPRDLLEERLSRVPVKSLREARFTCKNWKTLSKKRSFTKKHLAQEATSRESEFKVVMVLHCKVYLTSINLRGIHNGFDPSINRQAKLVSLNGTDQIDISEVYHCDGLLLCISKDYTRVVVWNPYRSQTLWLKPSSPDHRMDWYICAIGYEKRKSSLRYKVLRFVDFAEEEFVEYEIYELKSNSWRVLDVTSDWEVEFYARGVSLKGNTYWFATDKFPEISSNLIHSVYFLLCFNFTSERFGPRLHLPCYPMDVDTVSLSSVREEQLAVLFQRKDNLHMEIWVTTKIEPEEVMWSKLFLAVDMQPLTDFKFGIADASFIIDEEKKVVVVFAKDKDVMYPTHNTAYIIGEDGYYKEVDLGKTTDKIRDPLVCSYVPSSAQIKQGGKRKKKGKLITD.

Residues 1 to 45 (MMSDLPRDLLEERLSRVPVKSLREARFTCKNWKTLSKKRSFTKKH) enclose the F-box domain.

In Arabidopsis thaliana (Mouse-ear cress), this protein is Putative F-box protein At3g17620.